We begin with the raw amino-acid sequence, 225 residues long: Transcriptional regulatory protein AfsQ1 (225 aa).

Residues 3 to 116 (SLLLIEDDDA…VLDARIRAVL (114 aa)) enclose the Response regulatory domain. Asp-52 bears the 4-aspartylphosphate mark. Positions 124–223 (TDSASFGSLV…VRGVGYRLDP (100 aa)) form a DNA-binding region, ompR/PhoB-type.

Phosphorylated by AfsQ2.

Its subcellular location is the cytoplasm. It localises to the nucleoid. In terms of biological role, forms part of a two-component regulatory system AfsQ1/AfsQ2 involved in secondary metabolism. In Streptomyces coelicolor (strain ATCC BAA-471 / A3(2) / M145), this protein is Transcriptional regulatory protein AfsQ1.